We begin with the raw amino-acid sequence, 369 residues long: Small ribosomal subunit biogenesis GTPase RsgA (369 aa).

Residues 88-246 form the CP-type G domain; sequence RTVLERPPVA…LADTPGFNQP (159 aa). Residues 137–140 and 188–196 each bind GTP; these read NKQD and GPSGVGKSS. Zn(2+) contacts are provided by cysteine 271, cysteine 276, histidine 278, and cysteine 284. The tract at residues 307–369 is disordered; that stretch reads QNPENSRETD…DLDNLQEDWE (63 aa). Residues 359-369 show a composition bias toward acidic residues; that stretch reads TDLDNLQEDWE.

It belongs to the TRAFAC class YlqF/YawG GTPase family. RsgA subfamily. Monomer. Associates with 30S ribosomal subunit, binds 16S rRNA. Requires Zn(2+) as cofactor.

Its subcellular location is the cytoplasm. In terms of biological role, one of several proteins that assist in the late maturation steps of the functional core of the 30S ribosomal subunit. Helps release RbfA from mature subunits. May play a role in the assembly of ribosomal proteins into the subunit. Circularly permuted GTPase that catalyzes slow GTP hydrolysis, GTPase activity is stimulated by the 30S ribosomal subunit. The polypeptide is Small ribosomal subunit biogenesis GTPase RsgA (Synechocystis sp. (strain ATCC 27184 / PCC 6803 / Kazusa)).